The following is a 321-amino-acid chain: Olfactory receptor 52N4 (321 aa).

Over 1–27 (MLTLNKTDLIPASFILNGVPGLEDTQL) the chain is Extracellular. Asn-5 carries N-linked (GlcNAc...) asparagine glycosylation. The helical transmembrane segment at 28 to 48 (WISFPFCSMYVVAMVGNCGLL) threads the bilayer. Residues 49-56 (YLIHYEDA) lie on the Cytoplasmic side of the membrane. The helical transmembrane segment at 57 to 77 (LHKPMYYFLAMLSFTDLVMCS) threads the bilayer. The Extracellular portion of the chain corresponds to 78–101 (STIPKALCIFWFHLKDIGFDECLV). A disulfide bridge connects residues Cys-99 and Cys-191. A helical membrane pass occupies residues 102–122 (QMFFTHTFTGMESGVLMLMAL). The Cytoplasmic portion of the chain corresponds to 123 to 141 (DRYVAICYPLRYSTILTNP). The helical transmembrane segment at 142 to 162 (VIAKVGTATFLRGVLLIIPFT) threads the bilayer. At 163–198 (FLTKLLPYCRGNILPHTYCDHMSVAKLSCGNVKVNA) the chain is on the extracellular side. The helical transmembrane segment at 199–219 (IYGLMVALLIWGFDILCITNS) threads the bilayer. At 220–239 (YTMILRAVVSLSSADARQKA) the chain is on the cytoplasmic side. Residues 240-260 (FNTCTAHICAIVFSYTPAFFS) traverse the membrane as a helical segment. The Extracellular portion of the chain corresponds to 261–276 (FFSHRFGEHIIPPSCH). Residues 277–297 (IIVANIYLLLPPTMNPIVYGV) traverse the membrane as a helical segment. The Cytoplasmic segment spans residues 298–321 (KTKQIRDCVIRILSGSKDTKSYSM).

The protein belongs to the G-protein coupled receptor 1 family.

Its subcellular location is the cell membrane. Odorant receptor. In Homo sapiens (Human), this protein is Olfactory receptor 52N4 (OR52N4).